The primary structure comprises 103 residues: UPF0145 protein CYB_1351 (103 aa).

The protein belongs to the UPF0145 family.

The polypeptide is UPF0145 protein CYB_1351 (Synechococcus sp. (strain JA-2-3B'a(2-13)) (Cyanobacteria bacterium Yellowstone B-Prime)).